Consider the following 154-residue polypeptide: Cyanate hydratase (154 aa).

Active-site residues include Arg100, Glu103, and Ser126.

Belongs to the cyanase family.

The catalysed reaction is cyanate + hydrogencarbonate + 3 H(+) = NH4(+) + 2 CO2. Catalyzes the reaction of cyanate with bicarbonate to produce ammonia and carbon dioxide. The sequence is that of Cyanate hydratase from Aspergillus clavatus (strain ATCC 1007 / CBS 513.65 / DSM 816 / NCTC 3887 / NRRL 1 / QM 1276 / 107).